We begin with the raw amino-acid sequence, 304 residues long: Recombination-associated protein RdgC (304 aa).

The protein belongs to the RdgC family.

The protein resides in the cytoplasm. It is found in the nucleoid. Functionally, may be involved in recombination. In Shewanella oneidensis (strain ATCC 700550 / JCM 31522 / CIP 106686 / LMG 19005 / NCIMB 14063 / MR-1), this protein is Recombination-associated protein RdgC.